The primary structure comprises 272 residues: Interleukin-2 receptor subunit alpha (272 aa).

The first 21 residues, 1–21 (MDPYLLMWGLLTFITVPGCQA), serve as a signal peptide directing secretion. A Sushi 1 domain is found at 22-84 (ELCDDDPPKI…SWDNQCQCTS (63 aa)). The Extracellular segment spans residues 22 to 240 (ELCDDDPPKI…ETFIFTTEYQ (219 aa)). 3 cysteine pairs are disulfide-bonded: Cys24-Cys67, Cys49-Cys80, and Cys51-Cys82. 2 N-linked (GlcNAc...) asparagine glycosylation sites follow: Asn70 and Asn89. Positions 87 to 98 (ARNTTKQVTPQP) are enriched in polar residues. The disordered stretch occupies residues 87–109 (ARNTTKQVTPQPEEQKERKTTEM). The 64-residue stretch at 123–186 (GHCREPPPWE…WTQPQLICTG (64 aa)) folds into the Sushi 2 domain. 2 disulfide bridges follow: Cys125-Cys168 and Cys152-Cys184. Positions 186-213 (GETEPSQFPGEEEPQASPDGLPESETSR) are disordered. The chain crosses the membrane as a helical span at residues 241-259 (VAVAGCVFLLISVLLLSGL). Residues 260-272 (TWQRRQRKNRRTI) lie on the Cytoplasmic side of the membrane.

As to quaternary structure, non-covalent dimer of an alpha and a beta subunit. IL2R exists in 3 different forms: a high affinity dimer, an intermediate affinity monomer (beta subunit), and a low affinity monomer (alpha subunit). The high and intermediate affinity forms also associate with a gamma subunit.

The protein resides in the membrane. Receptor for interleukin-2. The receptor is involved in the regulation of immune tolerance by controlling regulatory T cells (TREGs) activity. TREGs suppress the activation and expansion of autoreactive T-cells. The sequence is that of Interleukin-2 receptor subunit alpha (IL2RA) from Macaca mulatta (Rhesus macaque).